The sequence spans 68 residues: Medusin-AS (68 aa).

The first 22 residues, 1–22, serve as a signal peptide directing secretion; sequence MAFLKKSLFLVLFLGLVSLSVC. A propeptide spanning residues 23 to 49 is cleaved from the precursor; the sequence is EEEKRESEEEKNEQEEDDRDERSEEKR. The disordered stretch occupies residues 24-46; sequence EEKRESEEEKNEQEEDDRDERSE. The span at 31-41 shows a compositional bias: acidic residues; sequence EEKNEQEEDDR. Leucine amide is present on Leu67.

This sequence belongs to the frog skin active peptide (FSAP) family. Medusin subfamily. In terms of tissue distribution, expressed by the skin glands.

It is found in the secreted. Antimicrobial peptide active against Gram-positive bacteria and fungi but inactive against Gram-negative bacteria. Also inhibits growth of B.dendrobatidis zoospores at high concentrations. Shows anticancer activities. Shows hemolytic activity. The sequence is that of Medusin-AS from Agalychnis spurrelli (Gliding leaf frog).